We begin with the raw amino-acid sequence, 193 residues long: Hypoxanthine/guanine phosphoribosyltransferase (193 aa).

It belongs to the purine/pyrimidine phosphoribosyltransferase family. Archaeal HPRT subfamily. In terms of assembly, homodimer.

Its subcellular location is the cytoplasm. It catalyses the reaction IMP + diphosphate = hypoxanthine + 5-phospho-alpha-D-ribose 1-diphosphate. It carries out the reaction GMP + diphosphate = guanine + 5-phospho-alpha-D-ribose 1-diphosphate. Its pathway is purine metabolism; IMP biosynthesis via salvage pathway; IMP from hypoxanthine: step 1/1. Functionally, catalyzes a salvage reaction resulting in the formation of IMP that is energically less costly than de novo synthesis. Prefers hypoxanthine, has 66% activity with guanine while activity with adenine, xanthine, uracil, orotate, or cytosine is negligible. The protein is Hypoxanthine/guanine phosphoribosyltransferase of Methanothermobacter marburgensis (strain ATCC BAA-927 / DSM 2133 / JCM 14651 / NBRC 100331 / OCM 82 / Marburg) (Methanobacterium thermoautotrophicum).